Reading from the N-terminus, the 736-residue chain is DNA ligase (736 aa).

NAD(+) is bound by residues 41 to 45 (DQEYD), 91 to 92 (SL), and E125. K127 acts as the N6-AMP-lysine intermediate in catalysis. R148 contributes to the NAD(+) binding site. Residues 170–205 (ELTPLPLAGGAGGGPLDDSGSAPTPDPSRRREGKWN) are disordered. Residues E215, K347, and K371 each contribute to the NAD(+) site. Zn(2+) contacts are provided by C463, C466, C481, and C487. The BRCT domain maps to 656-736 (TLDSPVAGKT…GWAEIVAAAG (81 aa)).

The protein belongs to the NAD-dependent DNA ligase family. LigA subfamily. Mg(2+) is required as a cofactor. Mn(2+) serves as cofactor.

It catalyses the reaction NAD(+) + (deoxyribonucleotide)n-3'-hydroxyl + 5'-phospho-(deoxyribonucleotide)m = (deoxyribonucleotide)n+m + AMP + beta-nicotinamide D-nucleotide.. DNA ligase that catalyzes the formation of phosphodiester linkages between 5'-phosphoryl and 3'-hydroxyl groups in double-stranded DNA using NAD as a coenzyme and as the energy source for the reaction. It is essential for DNA replication and repair of damaged DNA. The sequence is that of DNA ligase from Erythrobacter litoralis (strain HTCC2594).